Here is an 871-residue protein sequence, read N- to C-terminus: Bifunctional cordycepin biosynthesis cluster protein 3 (871 aa).

The protein operates within secondary metabolite biosynthesis. Nucleoside/nucleotide kinase; part of the gene cluster that mediates the biosynthesis of cordycepin (COR) and pentostatin (PTN), two adenosine analogs with related bioactivity profiles as both mimic adenosine and can inhibit some of the processes that are adenosine dependent. Within the pathway, cns3 catalyzes both the first step of cordycepin biosynthesis by phosphorylating adenosine into 3'-AMP via its kinase activity and the conversion of adenosine into pentostatin via its ATP phosphoribosyltransferase activity. The first step of cordycepin biosynthesis involves hydroxyl phosphorylation of the 3'-OH position on adenosine to produce adenosine-3'-monophosphate (3'-AMP), catalyzed by kinase activity of cns3. Next, 3'-AMP is dephosphorylated to 2'-carbonyl-3'-deoxyadenosine (2'-C-3'-dA) by cns2, which is finally converted to cordycepin (3'-deoxyadenosine) by the oxidoreductase cns1. This is Bifunctional cordycepin biosynthesis cluster protein 3 from Cordyceps militaris (strain CM01) (Caterpillar fungus).